The chain runs to 306 residues: tRNA (guanine-N(7)-)-methyltransferase (306 aa).

Over residues 1–19 (MSSTAPLDSKATEQITTAA) the composition is skewed to polar residues. The disordered stretch occupies residues 1 to 65 (MSSTAPLDSK…EASPELPSDE (65 aa)). S-adenosyl-L-methionine contacts are provided by residues Gly-121, 144–145 (EI), 180–181 (NA), and Cys-200. The active site involves Asp-203. 278 to 280 (TEE) is a binding site for S-adenosyl-L-methionine.

It belongs to the class I-like SAM-binding methyltransferase superfamily. TrmB family. As to quaternary structure, forms a complex with TRM82.

It localises to the nucleus. It carries out the reaction guanosine(46) in tRNA + S-adenosyl-L-methionine = N(7)-methylguanosine(46) in tRNA + S-adenosyl-L-homocysteine. It functions in the pathway tRNA modification; N(7)-methylguanine-tRNA biosynthesis. Its function is as follows. Catalyzes the formation of N(7)-methylguanine at position 46 (m7G46) in tRNA. The protein is tRNA (guanine-N(7)-)-methyltransferase of Lodderomyces elongisporus (strain ATCC 11503 / CBS 2605 / JCM 1781 / NBRC 1676 / NRRL YB-4239) (Yeast).